Reading from the N-terminus, the 195-residue chain is Nucleoside-triphosphatase THEP1 (195 aa).

ATP-binding positions include 11–18 (GRPGSGKS) and 103–110 (VVVIDEIG).

It belongs to the THEP1 NTPase family.

It catalyses the reaction a ribonucleoside 5'-triphosphate + H2O = a ribonucleoside 5'-diphosphate + phosphate + H(+). Has nucleotide phosphatase activity towards ATP, GTP, CTP, TTP and UTP. May hydrolyze nucleoside diphosphates with lower efficiency. In Korarchaeum cryptofilum (strain OPF8), this protein is Nucleoside-triphosphatase THEP1.